The sequence spans 249 residues: ATP synthase subunit a 1 (249 aa).

6 helical membrane-spanning segments follow: residues 26-46, 84-104, 114-134, 143-163, 193-213, and 216-236; these read FTNV…FLYL, FFPF…LGLF, IIVT…YGFF, LFVP…IEII, FVVS…LPLI, and VAIT…FTVL.

It belongs to the ATPase A chain family. In terms of assembly, F-type ATPases have 2 components, CF(1) - the catalytic core - and CF(0) - the membrane proton channel. CF(1) has five subunits: alpha(3), beta(3), gamma(1), delta(1), epsilon(1). CF(0) has three main subunits: a(1), b(2) and c(9-12). The alpha and beta chains form an alternating ring which encloses part of the gamma chain. CF(1) is attached to CF(0) by a central stalk formed by the gamma and epsilon chains, while a peripheral stalk is formed by the delta and b chains.

Its subcellular location is the cell inner membrane. Key component of the proton channel; it plays a direct role in the translocation of protons across the membrane. The sequence is that of ATP synthase subunit a 1 from Brucella anthropi (strain ATCC 49188 / DSM 6882 / CCUG 24695 / JCM 21032 / LMG 3331 / NBRC 15819 / NCTC 12168 / Alc 37) (Ochrobactrum anthropi).